Consider the following 428-residue polypeptide: GTPase Obg (428 aa).

One can recognise an Obg domain in the interval 1-158 (MFVDQVKIYV…RDVILELKVL (158 aa)). Residues 159–329 (ADVGLVGFPS…LLFEVANLIE (171 aa)) enclose the OBG-type G domain. GTP contacts are provided by residues 165-172 (GFPSVGKS), 190-194 (FTTIV), 212-215 (DLPG), 282-285 (NKMD), and 310-312 (SAV). Ser172 and Thr192 together coordinate Mg(2+). Residues 350–428 (KFETEGVKFD…ILEYEFEFID (79 aa)) form the OCT domain.

It belongs to the TRAFAC class OBG-HflX-like GTPase superfamily. OBG GTPase family. As to quaternary structure, monomer. The cofactor is Mg(2+).

It localises to the cytoplasm. An essential GTPase which binds GTP, GDP and possibly (p)ppGpp with moderate affinity, with high nucleotide exchange rates and a fairly low GTP hydrolysis rate. Plays a role in control of the cell cycle, stress response, ribosome biogenesis and in those bacteria that undergo differentiation, in morphogenesis control. In Bacillus thuringiensis (strain Al Hakam), this protein is GTPase Obg.